The sequence spans 285 residues: MDKIKVGLQYWIPQHGLTRLVGKLASAKAGSLTTAIIRWFIKQYNVNMDEAKHADPKHYKTFNEFFVRELKEGARPIAEGDAIITHPADACVSQFGPITNGQLIQAKGHDFSAQELLGGDAALAEEFKDGSFATLYLSPRDYHRVHMPCDGTLRQMIYVPGDLFSVNPLTAENVPNLFARNERVVCIFDTEFGPMAQVLVGATIVGSIEQVWAGTITPPRGNTVYKWDYPASGNHAVILKKGEEMGRFKLGSTVINLFAKDAIRFDESMANGQPTVMGTPYAHQQ.

Residues aspartate 89, histidine 146, and serine 252 each act as charge relay system; for autoendoproteolytic cleavage activity in the active site. The active-site Schiff-base intermediate with substrate; via pyruvic acid; for decarboxylase activity is serine 252. A Pyruvic acid (Ser); by autocatalysis modification is found at serine 252.

It belongs to the phosphatidylserine decarboxylase family. PSD-B subfamily. Prokaryotic type I sub-subfamily. Heterodimer of a large membrane-associated beta subunit and a small pyruvoyl-containing alpha subunit. Requires pyruvate as cofactor. Is synthesized initially as an inactive proenzyme. Formation of the active enzyme involves a self-maturation process in which the active site pyruvoyl group is generated from an internal serine residue via an autocatalytic post-translational modification. Two non-identical subunits are generated from the proenzyme in this reaction, and the pyruvate is formed at the N-terminus of the alpha chain, which is derived from the carboxyl end of the proenzyme. The autoendoproteolytic cleavage occurs by a canonical serine protease mechanism, in which the side chain hydroxyl group of the serine supplies its oxygen atom to form the C-terminus of the beta chain, while the remainder of the serine residue undergoes an oxidative deamination to produce ammonia and the pyruvoyl prosthetic group on the alpha chain. During this reaction, the Ser that is part of the protease active site of the proenzyme becomes the pyruvoyl prosthetic group, which constitutes an essential element of the active site of the mature decarboxylase.

It localises to the cell membrane. It catalyses the reaction a 1,2-diacyl-sn-glycero-3-phospho-L-serine + H(+) = a 1,2-diacyl-sn-glycero-3-phosphoethanolamine + CO2. Its pathway is phospholipid metabolism; phosphatidylethanolamine biosynthesis; phosphatidylethanolamine from CDP-diacylglycerol: step 2/2. Functionally, catalyzes the formation of phosphatidylethanolamine (PtdEtn) from phosphatidylserine (PtdSer). This chain is Phosphatidylserine decarboxylase proenzyme, found in Vibrio vulnificus (strain CMCP6).